The sequence spans 419 residues: 3-phosphoshikimate 1-carboxyvinyltransferase (419 aa).

3-phosphoshikimate is bound by residues lysine 21, serine 22, and arginine 26. Lysine 21 is a phosphoenolpyruvate binding site. Residues glycine 91 and arginine 119 each coordinate phosphoenolpyruvate. Residues serine 164, serine 165, glutamine 166, serine 191, aspartate 305, and lysine 332 each contribute to the 3-phosphoshikimate site. Glutamine 166 contributes to the phosphoenolpyruvate binding site. Aspartate 305 acts as the Proton acceptor in catalysis. Residues arginine 336 and arginine 376 each contribute to the phosphoenolpyruvate site.

Belongs to the EPSP synthase family. As to quaternary structure, monomer.

It is found in the cytoplasm. It catalyses the reaction 3-phosphoshikimate + phosphoenolpyruvate = 5-O-(1-carboxyvinyl)-3-phosphoshikimate + phosphate. It functions in the pathway metabolic intermediate biosynthesis; chorismate biosynthesis. In terms of biological role, catalyzes the transfer of the enolpyruvyl moiety of phosphoenolpyruvate (PEP) to the 5-hydroxyl of shikimate-3-phosphate (S3P) to produce enolpyruvyl shikimate-3-phosphate and inorganic phosphate. In Methanothermobacter thermautotrophicus (strain ATCC 29096 / DSM 1053 / JCM 10044 / NBRC 100330 / Delta H) (Methanobacterium thermoautotrophicum), this protein is 3-phosphoshikimate 1-carboxyvinyltransferase.